We begin with the raw amino-acid sequence, 188 residues long: MAIMSDKWIKEAVINQSMIRPFAEKQVRVHNKEKIISYGLSSYGYDARVSNEFKIFTNINSTTVDPKNFSEYNLVDREVDVCIIPPNSFALGRTIEYFKIPRDVLVICVGKSTYARCGIIVNVTPLEPEWEGHVTLEFSNTTPLPAKIYANEGACQFLFLKSDQICDTSYADRQGKYMKQVGVTLPLT.

DCTP-binding positions include 111–116, 135–137, Q156, Y170, K179, and Q180; these read KSTYAR and TLE. The Proton donor/acceptor role is filled by E137.

It belongs to the dCTP deaminase family. As to quaternary structure, homotrimer.

The enzyme catalyses dCTP + H2O + H(+) = dUTP + NH4(+). It functions in the pathway pyrimidine metabolism; dUMP biosynthesis; dUMP from dCTP (dUTP route): step 1/2. Catalyzes the deamination of dCTP to dUTP. This Rickettsia felis (strain ATCC VR-1525 / URRWXCal2) (Rickettsia azadi) protein is dCTP deaminase.